Consider the following 205-residue polypeptide: Glycerol-3-phosphate acyltransferase (205 aa).

The Periplasmic portion of the chain corresponds to 1 to 3 (MSA). The helical transmembrane segment at 4-24 (IAPGMILFAYLCGSISSAILV) threads the bilayer. Over 25 to 52 (CRIAGLPDPRESGSGNPGATNVLRIGGK) the chain is Cytoplasmic. A helical transmembrane segment spans residues 53-73 (GAAVAVLIFDILKGMLPVWGA). Residues 74-80 (YALGITP) are Periplasmic-facing. The chain crosses the membrane as a helical span at residues 81–101 (FWLGLIAIAACLGHIWPVFFG). The Cytoplasmic segment spans residues 102 to 111 (FKGGKGVATA). The helical transmembrane segment at 112–132 (FGAIAPIGWDLTGVIAGTWLL) threads the bilayer. Residues 133–137 (TVLLS) are Periplasmic-facing. A helical transmembrane segment spans residues 138–158 (GYSSLGAIVSALIAPFYVWWF). Residues 159 to 205 (KPQFTFPVSMLSCLILLRHHDNIQRLWRRQETKIWTKLKKKREKESK) are Cytoplasmic-facing.

It belongs to the PlsY family. In terms of assembly, probably interacts with PlsX.

The protein localises to the cell inner membrane. The catalysed reaction is sn-glycerol 3-phosphate + an acyl-CoA = a 1-acyl-sn-glycero-3-phosphate + CoA. It catalyses the reaction a fatty acyl-[ACP] + sn-glycerol 3-phosphate = a 1-acyl-sn-glycero-3-phosphate + holo-[ACP]. The protein operates within lipid metabolism; phospholipid metabolism. Catalyzes the transfer of an acyl group from acyl-ACP to glycerol-3-phosphate (G3P) to form lysophosphatidic acid (LPA). This enzyme can also utilize acyl-CoA as fatty acyl donor, but not acyl-PO(4). This is Glycerol-3-phosphate acyltransferase from Salmonella arizonae (strain ATCC BAA-731 / CDC346-86 / RSK2980).